The following is a 132-amino-acid chain: MLYNKLITIAALLVPALAAPQGLDVRDCDYTCGSHCYSASAVSDAQSAGYQLYSAGQSVGRSRYPHQYRNYEGFNFPVSGNYYEWPILSSGSTYNGGSPGADRVVFNDNDELAGLITHTGASGNGFVACSGW.

The first 26 residues, Met1 to Arg26, serve as a signal peptide directing secretion. 2 disulfides stabilise this stretch: Cys28–Cys36 and Cys32–Cys129. His66 is an active-site residue. The Proton acceptor role is filled by Glu84. His118 serves as the catalytic Proton donor.

Belongs to the ribonuclease N1/T1 family.

The protein resides in the secreted. It carries out the reaction [RNA] containing guanosine + H2O = an [RNA fragment]-3'-guanosine-3'-phosphate + a 5'-hydroxy-ribonucleotide-3'-[RNA fragment].. The chain is Guanyl-specific ribonuclease C2 from Aspergillus clavatus (strain ATCC 1007 / CBS 513.65 / DSM 816 / NCTC 3887 / NRRL 1 / QM 1276 / 107).